The following is a 144-amino-acid chain: 3-dehydroquinate dehydratase (144 aa).

Residue Tyr-22 is the Proton acceptor of the active site. Substrate-binding residues include Asn-73, His-79, and Asp-86. His-99 (proton donor) is an active-site residue. Substrate-binding positions include 100–101 and Arg-110; that span reads IS.

This sequence belongs to the type-II 3-dehydroquinase family. As to quaternary structure, homododecamer.

The enzyme catalyses 3-dehydroquinate = 3-dehydroshikimate + H2O. It participates in metabolic intermediate biosynthesis; chorismate biosynthesis; chorismate from D-erythrose 4-phosphate and phosphoenolpyruvate: step 3/7. Its function is as follows. Catalyzes a trans-dehydration via an enolate intermediate. This is 3-dehydroquinate dehydratase from Clostridium acetobutylicum (strain ATCC 824 / DSM 792 / JCM 1419 / IAM 19013 / LMG 5710 / NBRC 13948 / NRRL B-527 / VKM B-1787 / 2291 / W).